Consider the following 640-residue polypeptide: Calpain-5 (640 aa).

Positions 26 to 343 constitute a Calpain catalytic domain; that stretch reads LFEDPHFPAS…FTDIIKCRLI (318 aa). Catalysis depends on residues cysteine 81, histidine 252, and asparagine 284. The interval 344-496 is domain III; sequence NTSYLSIHKT…VFTDVPSNCR (153 aa). In terms of domain architecture, C2 spans 499–617; the sequence is RLDEPPRTCW…HSLHLQDRSG (119 aa).

Belongs to the peptidase C2 family.

In terms of biological role, calcium-regulated non-lysosomal thiol-protease. The chain is Calpain-5 (Capn5) from Rattus norvegicus (Rat).